Reading from the N-terminus, the 439-residue chain is MSYFPAVNHISYEGAKSDNPFAFKFYNPDEIVSGKTMAEHLRFSIAYWHTFTEALSDPFGAGTAIRPWNAYTGMDLAKARVEAAFEFFEKINVPYFCFHDVDIAPEGSSLKETYANLDVIVAMIKDYMKDSNTKLLWNTANNFTHPRFVGGAASSNEADVFAYSAAKVKKGLEIGKELGAENYVFWGGREGYESLLNTDLKLEMDNLGRFFHMAVDYAKEIGFDGQFLIEPKPKEPTTHQYDFDVATGYAFLQHYGLQDSFKFNIEANHATLAGHTFEHELRYARIHHMLGSVDANQGDPLLGWDTDEFPTDLYSTTLAMYEILQNGGLGRGGLNFDAKVRRGSFEADDLFFAHIAGMDSFAIGLKVAQQLIDDRVLEQFVDSRYQSYKEGIGREIVLGNTDFHQLEAHALSLGEIKTRSGRVERIKAIINQYLLNAFA.

Active-site residues include His99 and Asp102. Residues Glu230, Glu266, His269, Asp294, Asp305, Asp307, and Asp337 each coordinate Mg(2+).

It belongs to the xylose isomerase family. As to quaternary structure, homotetramer. It depends on Mg(2+) as a cofactor.

The protein resides in the cytoplasm. It catalyses the reaction alpha-D-xylose = alpha-D-xylulofuranose. This is Xylose isomerase from Shouchella clausii (strain KSM-K16) (Alkalihalobacillus clausii).